Here is a 433-residue protein sequence, read N- to C-terminus: ATP-dependent protease ATPase subunit HslU (433 aa).

ATP-binding positions include Ile-18, 60–65 (GVGKTE), Asp-246, Glu-311, and Arg-383.

This sequence belongs to the ClpX chaperone family. HslU subfamily. As to quaternary structure, a double ring-shaped homohexamer of HslV is capped on each side by a ring-shaped HslU homohexamer. The assembly of the HslU/HslV complex is dependent on binding of ATP.

The protein localises to the cytoplasm. Its function is as follows. ATPase subunit of a proteasome-like degradation complex; this subunit has chaperone activity. The binding of ATP and its subsequent hydrolysis by HslU are essential for unfolding of protein substrates subsequently hydrolyzed by HslV. HslU recognizes the N-terminal part of its protein substrates and unfolds these before they are guided to HslV for hydrolysis. In Cereibacter sphaeroides (strain ATCC 17025 / ATH 2.4.3) (Rhodobacter sphaeroides), this protein is ATP-dependent protease ATPase subunit HslU.